A 240-amino-acid chain; its full sequence is uncharacterized protein (240 aa).

Residues 73 to 93 (LLGCLYFFIYFVAPTLGPVLF) form a helical membrane-spanning segment.

This sequence belongs to the universal ribosomal protein uS3 family.

It localises to the mitochondrion membrane. This is an uncharacterized protein from Arabidopsis thaliana (Mouse-ear cress).